Reading from the N-terminus, the 223-residue chain is Deoxyribose-phosphate aldolase (223 aa).

Asp-92 (proton donor/acceptor) is an active-site residue. Catalysis depends on Lys-154, which acts as the Schiff-base intermediate with acetaldehyde. Lys-182 acts as the Proton donor/acceptor in catalysis.

This sequence belongs to the DeoC/FbaB aldolase family. DeoC type 1 subfamily.

Its subcellular location is the cytoplasm. It catalyses the reaction 2-deoxy-D-ribose 5-phosphate = D-glyceraldehyde 3-phosphate + acetaldehyde. Its pathway is carbohydrate degradation; 2-deoxy-D-ribose 1-phosphate degradation; D-glyceraldehyde 3-phosphate and acetaldehyde from 2-deoxy-alpha-D-ribose 1-phosphate: step 2/2. Functionally, catalyzes a reversible aldol reaction between acetaldehyde and D-glyceraldehyde 3-phosphate to generate 2-deoxy-D-ribose 5-phosphate. This chain is Deoxyribose-phosphate aldolase, found in Haemophilus influenzae (strain ATCC 51907 / DSM 11121 / KW20 / Rd).